A 417-amino-acid polypeptide reads, in one-letter code: Serine--tRNA ligase (417 aa).

Residue 226–228 (TSE) participates in L-serine binding. Residues 257–259 (RRE) and V273 each bind ATP. E280 is an L-serine binding site. 344 to 347 (ELTS) contributes to the ATP binding site. T379 serves as a coordination point for L-serine.

This sequence belongs to the class-II aminoacyl-tRNA synthetase family. Type-1 seryl-tRNA synthetase subfamily. As to quaternary structure, homodimer. The tRNA molecule binds across the dimer.

It is found in the cytoplasm. It carries out the reaction tRNA(Ser) + L-serine + ATP = L-seryl-tRNA(Ser) + AMP + diphosphate + H(+). It catalyses the reaction tRNA(Sec) + L-serine + ATP = L-seryl-tRNA(Sec) + AMP + diphosphate + H(+). Its pathway is aminoacyl-tRNA biosynthesis; selenocysteinyl-tRNA(Sec) biosynthesis; L-seryl-tRNA(Sec) from L-serine and tRNA(Sec): step 1/1. Functionally, catalyzes the attachment of serine to tRNA(Ser). Is also able to aminoacylate tRNA(Sec) with serine, to form the misacylated tRNA L-seryl-tRNA(Sec), which will be further converted into selenocysteinyl-tRNA(Sec). This chain is Serine--tRNA ligase, found in Mycolicibacterium smegmatis (strain ATCC 700084 / mc(2)155) (Mycobacterium smegmatis).